We begin with the raw amino-acid sequence, 456 residues long: E3 ubiquitin-protein ligase PUB24 (456 aa).

Residues 9–83 enclose the U-box domain; sequence EIPNYFICPI…QHWCVENETR (75 aa).

Auto-ubiquitinated.

The enzyme catalyses S-ubiquitinyl-[E2 ubiquitin-conjugating enzyme]-L-cysteine + [acceptor protein]-L-lysine = [E2 ubiquitin-conjugating enzyme]-L-cysteine + N(6)-ubiquitinyl-[acceptor protein]-L-lysine.. The protein operates within protein modification; protein ubiquitination. Functionally, E3 ubiquitin-protein ligase that acts as a negative regulator of the immunity triggered by the pathogen-associated molecular patterns (PAMPs), in association with PUB22 and PUB23. This Arabidopsis thaliana (Mouse-ear cress) protein is E3 ubiquitin-protein ligase PUB24 (PUB24).